A 472-amino-acid polypeptide reads, in one-letter code: 3-isopropylmalate dehydratase large subunit (472 aa).

3 residues coordinate [4Fe-4S] cluster: Cys-352, Cys-412, and Cys-415.

This sequence belongs to the aconitase/IPM isomerase family. LeuC type 1 subfamily. Heterodimer of LeuC and LeuD. It depends on [4Fe-4S] cluster as a cofactor.

The catalysed reaction is (2R,3S)-3-isopropylmalate = (2S)-2-isopropylmalate. It participates in amino-acid biosynthesis; L-leucine biosynthesis; L-leucine from 3-methyl-2-oxobutanoate: step 2/4. Functionally, catalyzes the isomerization between 2-isopropylmalate and 3-isopropylmalate, via the formation of 2-isopropylmaleate. The chain is 3-isopropylmalate dehydratase large subunit from Roseiflexus castenholzii (strain DSM 13941 / HLO8).